Here is a 386-residue protein sequence, read N- to C-terminus: Lipid-A-disaccharide synthase (386 aa).

Belongs to the LpxB family.

It carries out the reaction a lipid X + a UDP-2-N,3-O-bis[(3R)-3-hydroxyacyl]-alpha-D-glucosamine = a lipid A disaccharide + UDP + H(+). Its pathway is bacterial outer membrane biogenesis; LPS lipid A biosynthesis. Its function is as follows. Condensation of UDP-2,3-diacylglucosamine and 2,3-diacylglucosamine-1-phosphate to form lipid A disaccharide, a precursor of lipid A, a phosphorylated glycolipid that anchors the lipopolysaccharide to the outer membrane of the cell. This chain is Lipid-A-disaccharide synthase, found in Chromobacterium violaceum (strain ATCC 12472 / DSM 30191 / JCM 1249 / CCUG 213 / NBRC 12614 / NCIMB 9131 / NCTC 9757 / MK).